We begin with the raw amino-acid sequence, 126 residues long: Large ribosomal subunit protein bL12 (126 aa).

It belongs to the bacterial ribosomal protein bL12 family. Homodimer. Part of the ribosomal stalk of the 50S ribosomal subunit. Forms a multimeric L10(L12)X complex, where L10 forms an elongated spine to which 2 to 4 L12 dimers bind in a sequential fashion. Binds GTP-bound translation factors.

Its function is as follows. Forms part of the ribosomal stalk which helps the ribosome interact with GTP-bound translation factors. Is thus essential for accurate translation. This chain is Large ribosomal subunit protein bL12, found in Chlorobaculum parvum (strain DSM 263 / NCIMB 8327) (Chlorobium vibrioforme subsp. thiosulfatophilum).